The primary structure comprises 76 residues: MAKIFRITGIMSKKGKDPLYFRKEYKALKPEDALEILYSEFGGRYKVKRSRIKILNIEEIKPEDVTDPVLKKLVTA.

It belongs to the eukaryotic ribosomal protein eL20 family. Part of the 50S ribosomal subunit. Binds 23S rRNA.

This is Large ribosomal subunit protein eL20 from Methanocaldococcus jannaschii (strain ATCC 43067 / DSM 2661 / JAL-1 / JCM 10045 / NBRC 100440) (Methanococcus jannaschii).